Consider the following 336-residue polypeptide: Ornithine carbamoyltransferase, catabolic (336 aa).

Residues 57 to 60 (STRT), Gln-84, Arg-108, and 135 to 138 (HPTQ) each bind carbamoyl phosphate. Residues Asn-168, Asp-232, and 236–237 (SM) contribute to the L-ornithine site. Carbamoyl phosphate-binding positions include 274–275 (CL) and Arg-321.

Belongs to the aspartate/ornithine carbamoyltransferase superfamily. OTCase family.

The protein resides in the cytoplasm. The catalysed reaction is carbamoyl phosphate + L-ornithine = L-citrulline + phosphate + H(+). Its pathway is amino-acid degradation; L-arginine degradation via ADI pathway; carbamoyl phosphate from L-arginine: step 2/2. In terms of biological role, reversibly catalyzes the transfer of the carbamoyl group from carbamoyl phosphate (CP) to the N(epsilon) atom of ornithine (ORN) to produce L-citrulline. The polypeptide is Ornithine carbamoyltransferase, catabolic (Burkholderia mallei (strain ATCC 23344)).